Reading from the N-terminus, the 308-residue chain is Methionyl-tRNA formyltransferase (308 aa).

110 to 113 (SLLP) contacts (6S)-5,6,7,8-tetrahydrofolate.

It belongs to the Fmt family.

It catalyses the reaction L-methionyl-tRNA(fMet) + (6R)-10-formyltetrahydrofolate = N-formyl-L-methionyl-tRNA(fMet) + (6S)-5,6,7,8-tetrahydrofolate + H(+). Attaches a formyl group to the free amino group of methionyl-tRNA(fMet). The formyl group appears to play a dual role in the initiator identity of N-formylmethionyl-tRNA by promoting its recognition by IF2 and preventing the misappropriation of this tRNA by the elongation apparatus. This chain is Methionyl-tRNA formyltransferase, found in Neisseria gonorrhoeae (strain ATCC 700825 / FA 1090).